A 345-amino-acid polypeptide reads, in one-letter code: Phenylalanine--tRNA ligase alpha subunit (345 aa).

Residue E272 coordinates Mg(2+).

The protein belongs to the class-II aminoacyl-tRNA synthetase family. Phe-tRNA synthetase alpha subunit type 1 subfamily. As to quaternary structure, tetramer of two alpha and two beta subunits. The cofactor is Mg(2+).

The protein localises to the cytoplasm. The catalysed reaction is tRNA(Phe) + L-phenylalanine + ATP = L-phenylalanyl-tRNA(Phe) + AMP + diphosphate + H(+). This chain is Phenylalanine--tRNA ligase alpha subunit, found in Prochlorococcus marinus (strain MIT 9312).